The chain runs to 217 residues: tRNA (guanine-N(7)-)-methyltransferase (217 aa).

S-adenosyl-L-methionine contacts are provided by glutamate 44, glutamate 69, aspartate 96, and aspartate 118. Aspartate 118 is an active-site residue. Substrate is bound by residues lysine 122, aspartate 154, and 191–194 (TEYE).

It belongs to the class I-like SAM-binding methyltransferase superfamily. TrmB family.

The enzyme catalyses guanosine(46) in tRNA + S-adenosyl-L-methionine = N(7)-methylguanosine(46) in tRNA + S-adenosyl-L-homocysteine. It functions in the pathway tRNA modification; N(7)-methylguanine-tRNA biosynthesis. In terms of biological role, catalyzes the formation of N(7)-methylguanine at position 46 (m7G46) in tRNA. The protein is tRNA (guanine-N(7)-)-methyltransferase of Bacillus cereus (strain G9842).